A 323-amino-acid polypeptide reads, in one-letter code: Beta-ketoacyl-[acyl-carrier-protein] synthase III (323 aa).

Catalysis depends on residues C113 and H250. Residues 251–255 (QANRR) form an ACP-binding region. The active site involves N280.

Belongs to the thiolase-like superfamily. FabH family. In terms of assembly, homodimer.

It localises to the cytoplasm. It catalyses the reaction malonyl-[ACP] + acetyl-CoA + H(+) = 3-oxobutanoyl-[ACP] + CO2 + CoA. It participates in lipid metabolism; fatty acid biosynthesis. Functionally, catalyzes the condensation reaction of fatty acid synthesis by the addition to an acyl acceptor of two carbons from malonyl-ACP. Catalyzes the first condensation reaction which initiates fatty acid synthesis and may therefore play a role in governing the total rate of fatty acid production. Possesses both acetoacetyl-ACP synthase and acetyl transacylase activities. Its substrate specificity determines the biosynthesis of branched-chain and/or straight-chain of fatty acids. In Sinorhizobium medicae (strain WSM419) (Ensifer medicae), this protein is Beta-ketoacyl-[acyl-carrier-protein] synthase III.